Here is a 277-residue protein sequence, read N- to C-terminus: Large ribosomal subunit protein uL2 (277 aa).

Residues 219–277 (TVRGSVMNPNDHPHGGGEGKAPVGRKAPSTPWGKPALGLKTRNKKAKSDKLIVRRRNEK) are disordered. The span at 264-277 (AKSDKLIVRRRNEK) shows a compositional bias: basic and acidic residues.

Belongs to the universal ribosomal protein uL2 family. As to quaternary structure, part of the 50S ribosomal subunit. Forms a bridge to the 30S subunit in the 70S ribosome.

In terms of biological role, one of the primary rRNA binding proteins. Required for association of the 30S and 50S subunits to form the 70S ribosome, for tRNA binding and peptide bond formation. It has been suggested to have peptidyltransferase activity; this is somewhat controversial. Makes several contacts with the 16S rRNA in the 70S ribosome. This is Large ribosomal subunit protein uL2 from Streptococcus sanguinis (strain SK36).